The primary structure comprises 284 residues: Homeobox protein six1 (284 aa).

The segment at residues 124–183 (GEETSYCFKEKSRGVLREWYAHNPYPSPREKRELAEATGLTTTQVSNWFKNRRQRDRAAE) is a DNA-binding region (homeobox). The interval 168–230 (VSNWFKNRRQ…SPPQSPDQNS (63 aa)) is disordered. Over residues 179–190 (DRAAEAKERENT) the composition is skewed to basic and acidic residues. Low complexity predominate over residues 191–202 (ENNNTSTNKQNQ).

This sequence belongs to the SIX/Sine oculis homeobox family.

Its subcellular location is the nucleus. It is found in the cytoplasm. In terms of biological role, transcription factor that is involved in the regulation of cell proliferation, apoptosis and embryonic development. Depending on context, functions as a transcriptional repressor or activator. Required for the normal formation of pre-placodal ectoderm. This is Homeobox protein six1 (six1) from Xenopus laevis (African clawed frog).